The sequence spans 286 residues: MSYNESSQIKYWMFNNEGLKKLREQCNNQHKQVILEKTPSSEPNILSPDDELSLIHYYETKTLEIAMALNLPDKVSAPAIIYIKRFYLKNSIMQYGAKLVMLSCLFIACKTEDNHLDIDYYSNITKASPSDITNLEIIILESLNFNLIVYHPFRPMYGYILDINDNSAIYNNTNGVSPIKFDTLWETCKKSIQKSLFSDCCFEFHPQIIALACLNLNWDGFNMYCINNNNNNNNNNNNNNNNNNNNNNNNNNNNNNNNNNNNNNNNNNNNNNNNNNNNNNNNNLLL.

Residues 79–148 enclose the Cyclin N-terminal domain; the sequence is AIIYIKRFYL…ILESLNFNLI (70 aa). The segment at 235–286 is disordered; that stretch reads NNNNNNNNNNNNNNNNNNNNNNNNNNNNNNNNNNNNNNNNNNNNNNNNNLLL.

It belongs to the cyclin family. Cyclin C subfamily.

The protein localises to the nucleus. Functionally, may regulate cdk7 involved in transcription regulation and cell cycle progression. The protein is Putative cyclin-H (cycH) of Dictyostelium discoideum (Social amoeba).